We begin with the raw amino-acid sequence, 396 residues long: MFRYLLCSFGLVLMYPTGIDMYLVGLPQIASQLGASEAQLHIAFSVYLAGMATTMLFAGSLADRIGRKPITLFGALLFALASYFAAGSQTSDLFLIARFAQGIGAGCCYVVAFAILRDVLDDKRRAKVLSMVNGVTCIIPVIAPVIGHLIMLKFPWPSLFYTMAAMGLLVFALCLLVLRETHSKAAFHTQALPGVQRESFKQGFFISRLVITTLGVTTILSYVNVSPMLIMGQMGFDRGQYSNTMAMMALVSMLASFSTPFLLNRFKEKSLILFSQGLFVAAALVFILTQLGGVSHSFNLLGFAFVCSGFSIGFGVTMSQALSPFVARAGVASSLLGIAQVCTSALYIWVMGLLEVSAINILLLILSVGALVSITLMLAVPKMSEMVVNEQIPESA.

Residues 1–4 are Cytoplasmic-facing; it reads MFRY. The helical transmembrane segment at 5-25 threads the bilayer; the sequence is LLCSFGLVLMYPTGIDMYLVG. Residues 26 to 41 lie on the Periplasmic side of the membrane; that stretch reads LPQIASQLGASEAQLH. A helical transmembrane segment spans residues 42-62; it reads IAFSVYLAGMATTMLFAGSLA. Over 63–68 the chain is Cytoplasmic; sequence DRIGRK. Residues 69-89 traverse the membrane as a helical segment; sequence PITLFGALLFALASYFAAGSQ. Residues 90 to 92 are Periplasmic-facing; the sequence is TSD. The helical transmembrane segment at 93 to 113 threads the bilayer; it reads LFLIARFAQGIGAGCCYVVAF. Residues 114 to 131 are Cytoplasmic-facing; that stretch reads AILRDVLDDKRRAKVLSM. A helical membrane pass occupies residues 132-152; the sequence is VNGVTCIIPVIAPVIGHLIML. Topologically, residues 153-157 are periplasmic; the sequence is KFPWP. The chain crosses the membrane as a helical span at residues 158–178; that stretch reads SLFYTMAAMGLLVFALCLLVL. Over 179–209 the chain is Cytoplasmic; that stretch reads RETHSKAAFHTQALPGVQRESFKQGFFISRL. A helical transmembrane segment spans residues 210–230; the sequence is VITTLGVTTILSYVNVSPMLI. The Periplasmic segment spans residues 231–242; it reads MGQMGFDRGQYS. A helical membrane pass occupies residues 243–263; it reads NTMAMMALVSMLASFSTPFLL. Topologically, residues 264-270 are cytoplasmic; the sequence is NRFKEKS. Residues 271-291 traverse the membrane as a helical segment; it reads LILFSQGLFVAAALVFILTQL. The Periplasmic portion of the chain corresponds to 292-297; that stretch reads GGVSHS. The chain crosses the membrane as a helical span at residues 298-318; that stretch reads FNLLGFAFVCSGFSIGFGVTM. The Cytoplasmic segment spans residues 319 to 333; it reads SQALSPFVARAGVAS. A helical membrane pass occupies residues 334–354; the sequence is SLLGIAQVCTSALYIWVMGLL. Topologically, residues 355–360 are periplasmic; the sequence is EVSAIN. A helical membrane pass occupies residues 361 to 381; it reads ILLLILSVGALVSITLMLAVP. The Cytoplasmic segment spans residues 382 to 396; sequence KMSEMVVNEQIPESA.

It belongs to the major facilitator superfamily. DHA1 family. MdtL (TC 2.A.1.2.22) subfamily.

It localises to the cell inner membrane. The protein is Multidrug resistance protein MdtL (mdtL) of Shewanella oneidensis (strain ATCC 700550 / JCM 31522 / CIP 106686 / LMG 19005 / NCIMB 14063 / MR-1).